The primary structure comprises 372 residues: Bifunctional coenzyme PQQ synthesis protein C/D (372 aa).

Positions 1–267 are pqqC; the sequence is MTAQFPPPVP…VAETNSAEDS (267 aa). The segment at 260–288 is disordered; that stretch reads ETNSAEDSPAAAASPAATTAEPTAFSGSD. Low complexity predominate over residues 264-283; the sequence is AEDSPAAAASPAATTAEPTA. The segment at 268 to 280 is linker; that stretch reads PAAAASPAATTAE. The interval 281–372 is pqqD; the sequence is PTAFSGSDVP…GLAQKRVLER (92 aa).

In the N-terminal section; belongs to the PqqC family. This sequence in the C-terminal section; belongs to the PqqD family. In terms of assembly, monomer. Interacts with PqqE.

It carries out the reaction 6-(2-amino-2-carboxyethyl)-7,8-dioxo-1,2,3,4,7,8-hexahydroquinoline-2,4-dicarboxylate + 3 O2 = pyrroloquinoline quinone + 2 H2O2 + 2 H2O + H(+). It functions in the pathway cofactor biosynthesis; pyrroloquinoline quinone biosynthesis. Its function is as follows. The PqqC region is involved in ring cyclization and eight-electron oxidation of 3a-(2-amino-2-carboxyethyl)-4,5-dioxo-4,5,6,7,8,9-hexahydroquinoline-7,9-dicarboxylic-acid to PQQ. The PqqD region functions as a PqqA binding domain and presents PqqA to PqqE. The chain is Bifunctional coenzyme PQQ synthesis protein C/D (pqqCD) from Methylorubrum extorquens (strain ATCC 14718 / DSM 1338 / JCM 2805 / NCIMB 9133 / AM1) (Methylobacterium extorquens).